The chain runs to 571 residues: Urease subunit alpha (571 aa).

One can recognise a Urease domain in the interval 133 to 571 (GGIDTHVHFI…LPLTQRYFLF (439 aa)). 3 residues coordinate Ni(2+): H138, H140, and K221. K221 is modified (N6-carboxylysine). H223 contacts substrate. 2 residues coordinate Ni(2+): H250 and H276. Catalysis depends on H324, which acts as the Proton donor. Residue D364 coordinates Ni(2+).

This sequence belongs to the metallo-dependent hydrolases superfamily. Urease alpha subunit family. As to quaternary structure, heterotrimer of UreA (gamma), UreB (beta) and UreC (alpha) subunits. Three heterotrimers associate to form the active enzyme. Ni cation serves as cofactor. In terms of processing, carboxylation allows a single lysine to coordinate two nickel ions.

The protein resides in the cytoplasm. The catalysed reaction is urea + 2 H2O + H(+) = hydrogencarbonate + 2 NH4(+). The protein operates within nitrogen metabolism; urea degradation; CO(2) and NH(3) from urea (urease route): step 1/1. This is Urease subunit alpha from Staphylococcus aureus (strain MRSA252).